Here is a 596-residue protein sequence, read N- to C-terminus: Interleukin-1 receptor-associated kinase 3 (596 aa).

A Death domain is found at Trp-41–Gly-106. Phosphoserine; by IRAK1 is present on Ser-110. Residues Phe-165 to Phe-452 form the Protein kinase domain. ATP is bound by residues Ile-171 to Val-179, Lys-192, Ser-295 to Asn-298, and Asp-311. Ser-467 is subject to Phosphoserine. The segment at Asn-560–Glu-596 is disordered.

This sequence belongs to the protein kinase superfamily. TKL Ser/Thr protein kinase family. Pelle subfamily. As to quaternary structure, monomer. Homodimer; disulfide-linked. May interact with IRAK4 (when phosphorylated). Interacts (when phosphorylated at Ser-110) with PIN1 (via WW domain) in response to IL33-mediated (but not TLR4 ligand LPS) dendritic cell stimulation. Expressed in eosinophils, dendritic cells and/or monocytes (at protein level). Expressed predominantly in peripheral blood lymphocytes.

It localises to the cytoplasm. The protein localises to the nucleus. Its function is as follows. Putative inactive protein kinase which regulates signaling downstream of immune receptors including IL1R and Toll-like receptors. Inhibits dissociation of IRAK1 and IRAK4 from the Toll-like receptor signaling complex by either inhibiting the phosphorylation of IRAK1 and IRAK4 or stabilizing the receptor complex. Upon IL33-induced lung inflammation, positively regulates expression of IL6, CSF3, CXCL2 and CCL5 mRNAs in dendritic cells. The protein is Interleukin-1 receptor-associated kinase 3 of Homo sapiens (Human).